The chain runs to 362 residues: Protein-glutamate methylesterase/protein-glutamine glutaminase 1 (362 aa).

Positions 10–127 (RVLVVDDSSF…ADAQRVFREE (118 aa)) constitute a Response regulatory domain. Position 61 is a 4-aspartylphosphate (aspartate 61). The CheB-type methylesterase domain occupies 163 to 357 (PRPSQALAGK…LPLTQIGSEI (195 aa)). Residues serine 181, histidine 208, and aspartate 306 contribute to the active site.

Belongs to the CheB family. Phosphorylated by CheA. Phosphorylation of the N-terminal regulatory domain activates the methylesterase activity.

The protein resides in the cytoplasm. It carries out the reaction [protein]-L-glutamate 5-O-methyl ester + H2O = L-glutamyl-[protein] + methanol + H(+). The catalysed reaction is L-glutaminyl-[protein] + H2O = L-glutamyl-[protein] + NH4(+). Involved in chemotaxis. Part of a chemotaxis signal transduction system that modulates chemotaxis in response to various stimuli. Catalyzes the demethylation of specific methylglutamate residues introduced into the chemoreceptors (methyl-accepting chemotaxis proteins or MCP) by CheR. Also mediates the irreversible deamidation of specific glutamine residues to glutamic acid. This is Protein-glutamate methylesterase/protein-glutamine glutaminase 1 from Geobacter sulfurreducens (strain ATCC 51573 / DSM 12127 / PCA).